We begin with the raw amino-acid sequence, 287 residues long: Mitochondrial glycine transporter A (287 aa).

Solcar repeat units lie at residues 7–97, 104–188, and 198–282; these read HPAV…LKQR, PGPL…TKHL, and YAPV…LMAQ. The next 6 helical transmembrane spans lie at 13–38, 72–98, 110–135, 163–186, 202–228, and 257–275; these read FMCG…TRLQ, GVSP…KQRY, VLLG…TRFE, GLMA…SQTK, ANFS…KTHI, and GAVP…AWTV.

This sequence belongs to the mitochondrial carrier (TC 2.A.29) family. SLC25A38 subfamily. At 24 hours post-fertilization, expressed predominantly in posterior blood island, posterior cardinal vein and circulating blood, as well as in somites, brain and retina. At 34 hours post-fertilization, becomes restricted to posterior blood island and circulating blood.

The protein localises to the mitochondrion inner membrane. It carries out the reaction glycine(in) = glycine(out). In terms of biological role, mitochondrial glycine transporter that imports glycine into the mitochondrial matrix. Plays an important role in providing glycine for the first enzymatic step in heme biosynthesis, the condensation of glycine with succinyl-CoA to produce 5-aminolevulinate (ALA) in the mitochondrial matrix. Required during erythropoiesis. Functionally, may play a role as pro-apoptotic protein that induces caspase-dependent apoptosis. This chain is Mitochondrial glycine transporter A (slc25a38a), found in Danio rerio (Zebrafish).